The chain runs to 388 residues: Chorismate synthase (388 aa).

Residues R39 and R45 each coordinate NADP(+). FMN-binding positions include 132–134, 251–252, G296, 311–315, and R337; these read RSS, NA, and KPIPT.

It belongs to the chorismate synthase family. Homotetramer. It depends on FMNH2 as a cofactor.

It carries out the reaction 5-O-(1-carboxyvinyl)-3-phosphoshikimate = chorismate + phosphate. Its pathway is metabolic intermediate biosynthesis; chorismate biosynthesis; chorismate from D-erythrose 4-phosphate and phosphoenolpyruvate: step 7/7. Catalyzes the anti-1,4-elimination of the C-3 phosphate and the C-6 proR hydrogen from 5-enolpyruvylshikimate-3-phosphate (EPSP) to yield chorismate, which is the branch point compound that serves as the starting substrate for the three terminal pathways of aromatic amino acid biosynthesis. This reaction introduces a second double bond into the aromatic ring system. The protein is Chorismate synthase of Staphylococcus aureus (strain bovine RF122 / ET3-1).